Reading from the N-terminus, the 366-residue chain is tRNA/tmRNA (uracil-C(5))-methyltransferase (366 aa).

S-adenosyl-L-methionine contacts are provided by Q190, Y218, N223, E239, and D299. C324 acts as the Nucleophile in catalysis. The active-site Proton acceptor is E358.

This sequence belongs to the class I-like SAM-binding methyltransferase superfamily. RNA M5U methyltransferase family. TrmA subfamily.

The enzyme catalyses uridine(54) in tRNA + S-adenosyl-L-methionine = 5-methyluridine(54) in tRNA + S-adenosyl-L-homocysteine + H(+). It carries out the reaction uridine(341) in tmRNA + S-adenosyl-L-methionine = 5-methyluridine(341) in tmRNA + S-adenosyl-L-homocysteine + H(+). Its function is as follows. Dual-specificity methyltransferase that catalyzes the formation of 5-methyluridine at position 54 (m5U54) in all tRNAs, and that of position 341 (m5U341) in tmRNA (transfer-mRNA). The polypeptide is tRNA/tmRNA (uracil-C(5))-methyltransferase (Cellvibrio japonicus (strain Ueda107) (Pseudomonas fluorescens subsp. cellulosa)).